The chain runs to 341 residues: Ferredoxin--NADP reductase (341 aa).

Positions 36, 44, 49, 89, 123, 289, and 329 each coordinate FAD.

The protein belongs to the ferredoxin--NADP reductase type 2 family. Homodimer. It depends on FAD as a cofactor.

The catalysed reaction is 2 reduced [2Fe-2S]-[ferredoxin] + NADP(+) + H(+) = 2 oxidized [2Fe-2S]-[ferredoxin] + NADPH. This is Ferredoxin--NADP reductase from Ligilactobacillus salivarius (strain UCC118) (Lactobacillus salivarius).